Reading from the N-terminus, the 24-residue chain is 60 kDa chaperonin, mitochondrial (24 aa).

This sequence belongs to the chaperonin (HSP60) family. As to quaternary structure, forms a single seven-member ring complex, in tight association with the p63 protein. As to expression, testis.

Its subcellular location is the mitochondrion. In terms of biological role, implicated in mitochondrial protein import and macromolecular assembly. May facilitate the correct folding of imported proteins. May also prevent misfolding and promote the refolding and proper assembly of unfolded polypeptides generated under stress conditions in the mitochondrial matrix. In Heliothis virescens (Tobacco budworm moth), this protein is 60 kDa chaperonin, mitochondrial.